Here is a 555-residue protein sequence, read N- to C-terminus: Formate--tetrahydrofolate ligase (555 aa).

64 to 71 contributes to the ATP binding site; the sequence is TPAGEGKT.

Belongs to the formate--tetrahydrofolate ligase family.

The catalysed reaction is (6S)-5,6,7,8-tetrahydrofolate + formate + ATP = (6R)-10-formyltetrahydrofolate + ADP + phosphate. The protein operates within one-carbon metabolism; tetrahydrofolate interconversion. This chain is Formate--tetrahydrofolate ligase, found in Dinoroseobacter shibae (strain DSM 16493 / NCIMB 14021 / DFL 12).